A 263-amino-acid polypeptide reads, in one-letter code: Endonuclease 8 (263 aa).

Pro2 acts as the Schiff-base intermediate with DNA in catalysis. The active-site Proton donor is Glu3. Lys53 functions as the Proton donor; for beta-elimination activity in the catalytic mechanism. 3 residues coordinate DNA: Gln70, Arg125, and Asn169. The segment at Lys229–Lys263 adopts an FPG-type zinc-finger fold. Arg253 serves as the catalytic Proton donor; for delta-elimination activity.

Belongs to the FPG family. Zn(2+) is required as a cofactor.

The enzyme catalyses 2'-deoxyribonucleotide-(2'-deoxyribose 5'-phosphate)-2'-deoxyribonucleotide-DNA = a 3'-end 2'-deoxyribonucleotide-(2,3-dehydro-2,3-deoxyribose 5'-phosphate)-DNA + a 5'-end 5'-phospho-2'-deoxyribonucleoside-DNA + H(+). Involved in base excision repair of DNA damaged by oxidation or by mutagenic agents. Acts as a DNA glycosylase that recognizes and removes damaged bases. Has a preference for oxidized pyrimidines, such as thymine glycol, 5,6-dihydrouracil and 5,6-dihydrothymine. Has AP (apurinic/apyrimidinic) lyase activity and introduces nicks in the DNA strand. Cleaves the DNA backbone by beta-delta elimination to generate a single-strand break at the site of the removed base with both 3'- and 5'-phosphates. This chain is Endonuclease 8, found in Salmonella agona (strain SL483).